The sequence spans 202 residues: LexA repressor (202 aa).

The segment at residues R28–K48 is a DNA-binding region (H-T-H motif). Active-site for autocatalytic cleavage activity residues include S123 and K160.

The protein belongs to the peptidase S24 family. Homodimer.

The catalysed reaction is Hydrolysis of Ala-|-Gly bond in repressor LexA.. Represses a number of genes involved in the response to DNA damage (SOS response), including recA and lexA. In the presence of single-stranded DNA, RecA interacts with LexA causing an autocatalytic cleavage which disrupts the DNA-binding part of LexA, leading to derepression of the SOS regulon and eventually DNA repair. This Pseudomonas putida (Arthrobacter siderocapsulatus) protein is LexA repressor.